The sequence spans 367 residues: Quinolinate synthase (367 aa).

Iminosuccinate-binding residues include H64 and S82. [4Fe-4S] cluster is bound at residue C127. Iminosuccinate-binding positions include 153-155 (YVN) and S170. [4Fe-4S] cluster is bound at residue C216. Iminosuccinate-binding positions include 242-244 (HPE) and T259. Residue C302 participates in [4Fe-4S] cluster binding.

Belongs to the quinolinate synthase family. Type 2 subfamily. The cofactor is [4Fe-4S] cluster.

It localises to the cytoplasm. The catalysed reaction is iminosuccinate + dihydroxyacetone phosphate = quinolinate + phosphate + 2 H2O + H(+). Its pathway is cofactor biosynthesis; NAD(+) biosynthesis; quinolinate from iminoaspartate: step 1/1. In terms of biological role, catalyzes the condensation of iminoaspartate with dihydroxyacetone phosphate to form quinolinate. The chain is Quinolinate synthase from Caulobacter vibrioides (strain ATCC 19089 / CIP 103742 / CB 15) (Caulobacter crescentus).